We begin with the raw amino-acid sequence, 443 residues long: Adenylosuccinate synthetase (443 aa).

GTP is bound by residues 12–18 and 40–42; these read GDEGKGK and GHT. The Proton acceptor role is filled by Asp-13. Mg(2+)-binding residues include Asp-13 and Gly-40. IMP contacts are provided by residues 13-16, 38-41, Thr-128, Arg-142, Gln-223, Thr-238, and Arg-302; these read DEGK and NAGH. The active-site Proton donor is the His-41. Substrate is bound at residue 298–304; that stretch reads TTTGRRR. GTP contacts are provided by residues Arg-304, 330 to 332, and 412 to 414; these read KLD and SLG.

The protein belongs to the adenylosuccinate synthetase family. In terms of assembly, homodimer. It depends on Mg(2+) as a cofactor.

It is found in the cytoplasm. It catalyses the reaction IMP + L-aspartate + GTP = N(6)-(1,2-dicarboxyethyl)-AMP + GDP + phosphate + 2 H(+). It functions in the pathway purine metabolism; AMP biosynthesis via de novo pathway; AMP from IMP: step 1/2. Plays an important role in the de novo pathway of purine nucleotide biosynthesis. Catalyzes the first committed step in the biosynthesis of AMP from IMP. In Picosynechococcus sp. (strain ATCC 27264 / PCC 7002 / PR-6) (Agmenellum quadruplicatum), this protein is Adenylosuccinate synthetase.